Here is a 563-residue protein sequence, read N- to C-terminus: uncharacterized protein (563 aa).

Residues 1–13 (MASRSCICQVSAG) are Cytoplasmic-facing. A helical membrane pass occupies residues 14–34 (IIFLIGAALLVAGLVIVLNVF). At 35–528 (PNIVNNQIND…LFTPVSTVNT (494 aa)) the chain is on the lumenal side. N-linked (GlcNAc...) asparagine glycosylation is found at Asn43, Asn112, Asn133, Asn188, Asn265, Asn295, Asn315, and Asn502. Residues 529 to 549 (ICWIAVGLGAGLIALSIVMVI) form a helical membrane-spanning segment. The Cytoplasmic segment spans residues 550–563 (VSFCCFRDEHHKTS).

Belongs to the CD36 family.

Its subcellular location is the membrane. This is an uncharacterized protein from Caenorhabditis elegans.